The sequence spans 231 residues: Endonuclease NucS (231 aa).

This sequence belongs to the NucS endonuclease family.

It localises to the cytoplasm. Functionally, cleaves both 3' and 5' ssDNA extremities of branched DNA structures. The polypeptide is Endonuclease NucS (Micrococcus luteus (strain ATCC 4698 / DSM 20030 / JCM 1464 / CCM 169 / CCUG 5858 / IAM 1056 / NBRC 3333 / NCIMB 9278 / NCTC 2665 / VKM Ac-2230) (Micrococcus lysodeikticus)).